Here is a 293-residue protein sequence, read N- to C-terminus: Pyridoxal 5'-phosphate synthase subunit PdxS (293 aa).

D-ribose 5-phosphate is bound at residue Asp-23. Catalysis depends on Lys-80, which acts as the Schiff-base intermediate with D-ribose 5-phosphate. Gly-152 contributes to the D-ribose 5-phosphate binding site. A D-glyceraldehyde 3-phosphate-binding site is contributed by Arg-164. D-ribose 5-phosphate is bound by residues Gly-213 and 234–235; that span reads GS.

The protein belongs to the PdxS/SNZ family. In the presence of PdxT, forms a dodecamer of heterodimers.

It carries out the reaction aldehydo-D-ribose 5-phosphate + D-glyceraldehyde 3-phosphate + L-glutamine = pyridoxal 5'-phosphate + L-glutamate + phosphate + 3 H2O + H(+). It participates in cofactor biosynthesis; pyridoxal 5'-phosphate biosynthesis. In terms of biological role, catalyzes the formation of pyridoxal 5'-phosphate from ribose 5-phosphate (RBP), glyceraldehyde 3-phosphate (G3P) and ammonia. The ammonia is provided by the PdxT subunit. Can also use ribulose 5-phosphate and dihydroxyacetone phosphate as substrates, resulting from enzyme-catalyzed isomerization of RBP and G3P, respectively. This is Pyridoxal 5'-phosphate synthase subunit PdxS from Desulfovibrio desulfuricans (strain ATCC 27774 / DSM 6949 / MB).